The primary structure comprises 247 residues: DNA repair protein RecO (247 aa).

The protein belongs to the RecO family.

Functionally, involved in DNA repair and RecF pathway recombination. This chain is DNA repair protein RecO, found in Methylocella silvestris (strain DSM 15510 / CIP 108128 / LMG 27833 / NCIMB 13906 / BL2).